A 54-amino-acid polypeptide reads, in one-letter code: Protein PIGBOS1 (54 aa).

Residues 1–4 are Mitochondrial intermembrane-facing; it reads MFRR. Residues 5-25 traverse the membrane as a helical segment; that stretch reads LTFAQLLFATVLGIAGGVYIF. Over 26–54 the chain is Cytoplasmic; it reads QPVFEQYAKDQKELKEKMQLVQESEEKKS. Residues 30–36 form a required for interaction with CLCC1 region; the sequence is EQYAKDQ.

Homooligomer. Interacts (via C-terminus) with endoplasmic reticulum (ER) protein CLCC1; the interaction occurs at the mitochondria-associated ER membrane, a zone of contact between the ER and mitochondrial membranes, but does not appear to play a role in ER-mitochondria tethering and is not affected by ER stress.

The protein localises to the mitochondrion outer membrane. Its function is as follows. Plays a role in regulation of the unfolded protein response triggered by endoplasmic reticulum (ER) stress resulting from the presence of unfolded proteins in the ER lumen. This Homo sapiens (Human) protein is Protein PIGBOS1.